The sequence spans 238 residues: MRPAGRSANQVRPVTLTRNYTKHAEGSVLVEFGDTKVLCTASIDEGVPRFLKGQGQGWITAEYGMLPRSTHTRNAREAAKGKQGGRTMEIQRLIARALRAAVDLKALGEFTITLDCDVLQADGGTRTASITGACVALADALNKLVAAGKLKTNPMKGMVAAVSVGIVNGEAICDLEYIEDSAAETDMNVVMTEDGRIIEVQGTAEGEPFTHEELLTLLALARGGIESIITTQKAALEN.

Phosphate contacts are provided by residues Arg86 and 124–126; that span reads GTR.

It belongs to the RNase PH family. As to quaternary structure, homohexameric ring arranged as a trimer of dimers.

The catalysed reaction is tRNA(n+1) + phosphate = tRNA(n) + a ribonucleoside 5'-diphosphate. Its function is as follows. Phosphorolytic 3'-5' exoribonuclease that plays an important role in tRNA 3'-end maturation. Removes nucleotide residues following the 3'-CCA terminus of tRNAs; can also add nucleotides to the ends of RNA molecules by using nucleoside diphosphates as substrates, but this may not be physiologically important. Probably plays a role in initiation of 16S rRNA degradation (leading to ribosome degradation) during starvation. The chain is Ribonuclease PH from Klebsiella pneumoniae (strain 342).